The chain runs to 131 residues: Small ribosomal subunit protein uS8 (131 aa).

It belongs to the universal ribosomal protein uS8 family. In terms of assembly, part of the 30S ribosomal subunit. Contacts proteins S5 and S12.

Its function is as follows. One of the primary rRNA binding proteins, it binds directly to 16S rRNA central domain where it helps coordinate assembly of the platform of the 30S subunit. This chain is Small ribosomal subunit protein uS8, found in Campylobacter lari (strain RM2100 / D67 / ATCC BAA-1060).